A 394-amino-acid polypeptide reads, in one-letter code: Homoserine O-succinyltransferase (394 aa).

Residues 54–368 (NAVLICHALS…SSPAGHDAFL (315 aa)) form the AB hydrolase-1 domain. The active-site Nucleophile is Ser-160. Arg-236 is a binding site for substrate. Active-site residues include Asp-331 and His-364. Position 365 (Asp-365) interacts with substrate.

Belongs to the AB hydrolase superfamily. MetX family. As to quaternary structure, homodimer.

The protein resides in the cytoplasm. The catalysed reaction is L-homoserine + succinyl-CoA = O-succinyl-L-homoserine + CoA. The protein operates within amino-acid biosynthesis; L-methionine biosynthesis via de novo pathway; O-succinyl-L-homoserine from L-homoserine: step 1/1. In terms of biological role, transfers a succinyl group from succinyl-CoA to L-homoserine, forming succinyl-L-homoserine. The protein is Homoserine O-succinyltransferase of Magnetococcus marinus (strain ATCC BAA-1437 / JCM 17883 / MC-1).